The following is a 277-amino-acid chain: Diaminopimelate epimerase (277 aa).

Substrate-binding residues include N11 and N65. The active-site Proton donor is the C74. Residues 75-76, N180, and 198-199 each bind substrate; these read GN and ER. C208 acts as the Proton acceptor in catalysis. 209 to 210 lines the substrate pocket; that stretch reads GT.

The protein belongs to the diaminopimelate epimerase family. Homodimer.

It localises to the cytoplasm. It carries out the reaction (2S,6S)-2,6-diaminopimelate = meso-2,6-diaminopimelate. Its pathway is amino-acid biosynthesis; L-lysine biosynthesis via DAP pathway; DL-2,6-diaminopimelate from LL-2,6-diaminopimelate: step 1/1. Functionally, catalyzes the stereoinversion of LL-2,6-diaminopimelate (L,L-DAP) to meso-diaminopimelate (meso-DAP), a precursor of L-lysine and an essential component of the bacterial peptidoglycan. This Gemmatimonas aurantiaca (strain DSM 14586 / JCM 11422 / NBRC 100505 / T-27) protein is Diaminopimelate epimerase.